Reading from the N-terminus, the 122-residue chain is Large ribosomal subunit protein bL12 (122 aa).

The protein belongs to the bacterial ribosomal protein bL12 family. Homodimer. Part of the ribosomal stalk of the 50S ribosomal subunit. Forms a multimeric L10(L12)X complex, where L10 forms an elongated spine to which 2 to 4 L12 dimers bind in a sequential fashion. Binds GTP-bound translation factors.

Functionally, forms part of the ribosomal stalk which helps the ribosome interact with GTP-bound translation factors. Is thus essential for accurate translation. This is Large ribosomal subunit protein bL12 from Histophilus somni (strain 129Pt) (Haemophilus somnus).